The sequence spans 599 residues: Beta-(1--&gt;2)glucan export ATP-binding/permease protein NdvA (599 aa).

Positions Thr21 to Thr301 constitute an ABC transmembrane type-1 domain. The next 5 membrane-spanning stretches (helical) occupy residues Ile22–Phe42, Ile55–Phe75, Met156–Val176, Met248–Gly268, and Ile276–Ile296. The ABC transporter domain maps to Ile335–Ala569. Gly368–Thr375 provides a ligand contact to ATP.

The protein belongs to the ABC transporter superfamily. Beta-(1--&gt;2)glucan exporter (TC 3.A.1.108.1) family. As to quaternary structure, homodimer.

Its subcellular location is the cell inner membrane. It carries out the reaction [(1-&gt;2)-beta-D-glucosyl](n)(in) + ATP + H2O = [(1-&gt;2)-beta-D-glucosyl](n)(out) + ADP + phosphate + H(+). Involved in beta-(1--&gt;2)glucan export. Transmembrane domains (TMD) form a pore in the inner membrane and the ATP-binding domain (NBD) is responsible for energy generation. This chain is Beta-(1--&gt;2)glucan export ATP-binding/permease protein NdvA, found in Brucella melitensis biotype 1 (strain ATCC 23456 / CCUG 17765 / NCTC 10094 / 16M).